The primary structure comprises 555 residues: MSKPETPAAANFLRPIVQADLESGKHAKIVTRFPPEPNGYLHIGHAKSICLNFGLAQEFGGECNLRFDDTNPAKEDQEYIDAIKSDVRWLGFQWAGEERYASSYFDQLYDWAIHLIEAGKAYVCDLSPDEAREYRGSLTEPGRNSPYRERSVEENLDLFARMRAGEFPDGARALRAKIDMAAPNMNLRDPILYRIRHAHHHQTGDKWCIYPSYDFTHGQSDAIEGITHSICTLEFEDHRPLYEWFLDNLPVPCRPRQYEFARLNLNYTITSKRKLKQLVDEGHVGGWDDPRMSTLSGYRRRGYTPASIRAFCDMIGVNRAGGVVDIGMLEFAIREDLDANAARAMCVLKPLKVVITNYPQGRVESLELPRHPKQDMGVRVLPFSREIYIDAGDFEETPPAGYKRLIPGGEVRLRGSYVIRADEAIKDEAGNIVELRCSYDENTLGKNPEGRKVKGVIHWVPLEGSIKCEVRLYDRLFKVANPEKSEEGGSFLDNINSGSLVVLTGCRAEPSLANARPEERFQFEREGYFCADLKDSRPGAPVFNRTVTLRDSWGQ.

The 'HIGH' region signature appears at proline 35–histidine 45. ATP-binding positions include glutamate 36–asparagine 38 and histidine 42–serine 48. Positions 68 and 213 each coordinate L-glutamine. Residues threonine 232 and arginine 262 to leucine 263 each bind ATP. The 'KMSKS' region motif lies at isoleucine 269–arginine 273.

Belongs to the class-I aminoacyl-tRNA synthetase family. In terms of assembly, monomer.

It is found in the cytoplasm. It carries out the reaction tRNA(Gln) + L-glutamine + ATP = L-glutaminyl-tRNA(Gln) + AMP + diphosphate. In Azotobacter vinelandii (strain DJ / ATCC BAA-1303), this protein is Glutamine--tRNA ligase.